We begin with the raw amino-acid sequence, 410 residues long: Multifunctional CCA protein (410 aa).

Residues Gly-8 and Arg-11 each coordinate ATP. Residues Gly-8 and Arg-11 each contribute to the CTP site. Positions 21 and 23 each coordinate Mg(2+). The ATP site is built by Arg-91, Arg-137, and Arg-140. CTP is bound by residues Arg-91, Arg-137, and Arg-140. The region spanning 228–329 (TGVHVLSVLQ…LELLQSFDVY (102 aa)) is the HD domain.

It belongs to the tRNA nucleotidyltransferase/poly(A) polymerase family. Bacterial CCA-adding enzyme type 1 subfamily. As to quaternary structure, monomer. Can also form homodimers and oligomers. Requires Mg(2+) as cofactor. Ni(2+) is required as a cofactor.

It catalyses the reaction a tRNA precursor + 2 CTP + ATP = a tRNA with a 3' CCA end + 3 diphosphate. It carries out the reaction a tRNA with a 3' CCA end + 2 CTP + ATP = a tRNA with a 3' CCACCA end + 3 diphosphate. Its function is as follows. Catalyzes the addition and repair of the essential 3'-terminal CCA sequence in tRNAs without using a nucleic acid template. Adds these three nucleotides in the order of C, C, and A to the tRNA nucleotide-73, using CTP and ATP as substrates and producing inorganic pyrophosphate. tRNA 3'-terminal CCA addition is required both for tRNA processing and repair. Also involved in tRNA surveillance by mediating tandem CCA addition to generate a CCACCA at the 3' terminus of unstable tRNAs. While stable tRNAs receive only 3'-terminal CCA, unstable tRNAs are marked with CCACCA and rapidly degraded. The protein is Multifunctional CCA protein of Pseudomonas aeruginosa (strain LESB58).